Consider the following 223-residue polypeptide: UPF0173 metal-dependent hydrolase Amet_4625 (223 aa).

Belongs to the UPF0173 family.

In Alkaliphilus metalliredigens (strain QYMF), this protein is UPF0173 metal-dependent hydrolase Amet_4625.